Reading from the N-terminus, the 1755-residue chain is Transposon Ty1-MR2 Gag-Pol polyprotein (1755 aa).

Polar residues-rich tracts occupy residues 1-10, 48-60, and 127-152; these read MESQQLSNYP, TKANSQQTTTPAS, and QSQFPQYPSSVGTPLSTPSPESGNTF. Disordered regions lie at residues 1 to 93, 126 to 173, and 352 to 421; these read MESQ…MMTQ, PQSQ…RPPP, and GSRN…SKST. A compositionally biased stretch (low complexity) spans 153–165; it reads TDSSSADSDMTST. The tract at residues 299–401 is RNA-binding; it reads NNGIHINNKV…NSKSKTARAH (103 aa). Residues 402-418 show a composition bias toward low complexity; sequence NVSTSNNSPSTDNDSIS. A Phosphoserine modification is found at serine 416. The active-site For protease activity; shared with dimeric partner is the aspartate 461. Residues 583 to 640 are integrase-type zinc finger-like; it reads NVHTSESTRKYPYPFIHRMLAHANAQTIRYSLKNNTITYFNESDVDWSSAIDYQCPDC. Residues 660-835 enclose the Integrase catalytic domain; sequence NSYEPFQYLH…AGLDISTLLP (176 aa). Mg(2+)-binding residues include aspartate 671 and aspartate 736. Disordered stretches follow at residues 956-1087, 1092-1111, and 1130-1186; these read SKAV…ETEK, RSPSIDASPPENNSSHNIVP, and DLPL…EDNE. Residues 960–969 are compositionally biased toward low complexity; sequence SPTDSTPPST. Polar residues predominate over residues 1005–1015; sequence STPQISNIEST. The span at 1038-1053 shows a compositional bias: basic and acidic residues; sequence ESSHASKSKDFRHSDS. Polar residues-rich tracts occupy residues 1054–1082 and 1101–1111; these read YSENETNHTNVPISSTGGTNNKTVPQISD and PENNSSHNIVP. Residues 1178-1212 carry the Bipartite nuclear localization signal motif; it reads KKRSLEDNETEIKVSRDTWNTKNMRSLEPPRSKKR. A Reverse transcriptase Ty1/copia-type domain is found at 1338-1476; the sequence is NNYYITQLDI…DILGLEIKYQ (139 aa). Mg(2+)-binding residues include aspartate 1346, aspartate 1427, aspartate 1428, aspartate 1610, glutamate 1652, and aspartate 1685. An RNase H Ty1/copia-type domain is found at 1610–1752; sequence DASYGNQPYY…IKTFKLLTNK (143 aa).

In terms of assembly, the capsid protein forms a homotrimer, from which the VLPs are assembled. The protease is a homodimer, whose active site consists of two apposed aspartic acid residues. Initially, virus-like particles (VLPs) are composed of the structural unprocessed proteins Gag and Gag-Pol, and also contain the host initiator methionine tRNA (tRNA(i)-Met) which serves as a primer for minus-strand DNA synthesis, and a dimer of genomic Ty RNA. Processing of the polyproteins occurs within the particle and proceeds by an ordered pathway, called maturation. First, the protease (PR) is released by autocatalytic cleavage of the Gag-Pol polyprotein yielding capsid protein p45 and a Pol-p154 precursor protein. This cleavage is a prerequisite for subsequent processing of Pol-p154 at the remaining sites to release the mature structural and catalytic proteins. Maturation takes place prior to the RT reaction and is required to produce transposition-competent VLPs.

Its subcellular location is the cytoplasm. The protein localises to the nucleus. It catalyses the reaction DNA(n) + a 2'-deoxyribonucleoside 5'-triphosphate = DNA(n+1) + diphosphate. The enzyme catalyses Endonucleolytic cleavage to 5'-phosphomonoester.. In terms of biological role, capsid protein (CA) is the structural component of the virus-like particle (VLP), forming the shell that encapsulates the retrotransposons dimeric RNA genome. The particles are assembled from trimer-clustered units and there are holes in the capsid shells that allow for the diffusion of macromolecules. CA also has nucleocapsid-like chaperone activity, promoting primer tRNA(i)-Met annealing to the multipartite primer-binding site (PBS), dimerization of Ty1 RNA and initiation of reverse transcription. Its function is as follows. The aspartyl protease (PR) mediates the proteolytic cleavages of the Gag and Gag-Pol polyproteins after assembly of the VLP. Reverse transcriptase/ribonuclease H (RT) is a multifunctional enzyme that catalyzes the conversion of the retro-elements RNA genome into dsDNA within the VLP. The enzyme displays a DNA polymerase activity that can copy either DNA or RNA templates, and a ribonuclease H (RNase H) activity that cleaves the RNA strand of RNA-DNA heteroduplexes during plus-strand synthesis and hydrolyzes RNA primers. The conversion leads to a linear dsDNA copy of the retrotransposon that includes long terminal repeats (LTRs) at both ends. Functionally, integrase (IN) targets the VLP to the nucleus, where a subparticle preintegration complex (PIC) containing at least integrase and the newly synthesized dsDNA copy of the retrotransposon must transit the nuclear membrane. Once in the nucleus, integrase performs the integration of the dsDNA into the host genome. This is Transposon Ty1-MR2 Gag-Pol polyprotein (TY1B-MR2) from Saccharomyces cerevisiae (strain ATCC 204508 / S288c) (Baker's yeast).